The chain runs to 898 residues: Alanine--tRNA ligase (898 aa).

Residues H584, H588, C686, and H690 each coordinate Zn(2+).

This sequence belongs to the class-II aminoacyl-tRNA synthetase family. The cofactor is Zn(2+).

It localises to the cytoplasm. It carries out the reaction tRNA(Ala) + L-alanine + ATP = L-alanyl-tRNA(Ala) + AMP + diphosphate. Its function is as follows. Catalyzes the attachment of alanine to tRNA(Ala) in a two-step reaction: alanine is first activated by ATP to form Ala-AMP and then transferred to the acceptor end of tRNA(Ala). Also edits incorrectly charged Ser-tRNA(Ala) and Gly-tRNA(Ala) via its editing domain. This is Alanine--tRNA ligase from Myxococcus xanthus (strain DK1622).